The sequence spans 312 residues: MEIIFYHPTFNAAWWVNALEKALPHARVREWKVGDNNPADYALVWQPPVEMLAGRRLKAVFVLGAGVDAILSKLNAHPEMLDASIPLFRLEDTGMGLQMQEYAVSQVLHWFRRFDDYQALKNQALWKPLPEYTREEFSVGIMGAGVLGAKVAESLQAWGFPLRCWSRSRKSWPGVESYVGREELRAFLNQTRVLINLLPNTTQTVGIINSELLDQLPDGAYVLNLARGVHVQEADLLAALDSGKLKGAMLDVFSQEPLPQESPLWRHPRVAMTPHIAAVTRPAEAIDYISRTITQLEKGEPVTGQVDRARGY.

Residue R227 is part of the active site. The active-site Proton donor is H275.

The protein belongs to the D-isomer specific 2-hydroxyacid dehydrogenase family. GhrA subfamily.

Its subcellular location is the cytoplasm. The catalysed reaction is glycolate + NADP(+) = glyoxylate + NADPH + H(+). The enzyme catalyses (R)-glycerate + NAD(+) = 3-hydroxypyruvate + NADH + H(+). It carries out the reaction (R)-glycerate + NADP(+) = 3-hydroxypyruvate + NADPH + H(+). Functionally, catalyzes the NADPH-dependent reduction of glyoxylate and hydroxypyruvate into glycolate and glycerate, respectively. The chain is Glyoxylate/hydroxypyruvate reductase A from Salmonella choleraesuis (strain SC-B67).